The following is a 404-amino-acid chain: Propionate kinase (404 aa).

It belongs to the acetokinase family. PduW subfamily.

It localises to the cytoplasm. The enzyme catalyses propanoate + ATP = propanoyl phosphate + ADP. The protein operates within polyol metabolism; 1,2-propanediol degradation. Functionally, works with phosphate acetyltransferase (pta) to capture exogenous propionate and regenerate propionyl-CoA during degradation of 1,2-propanediol (1,2-PD). In Citrobacter koseri (strain ATCC BAA-895 / CDC 4225-83 / SGSC4696), this protein is Propionate kinase.